The following is a 392-amino-acid chain: ATP-dependent RNA helicase eIF4A (392 aa).

Positions 19 to 47 match the Q motif motif; it reads DTFDDMNLKPELLRGIYAYGFERPSAIQQ. A Helicase ATP-binding domain is found at 50-220; it reads IMPILGERDV…TKFMRDPIRI (171 aa). Residue 63-70 coordinates ATP; it reads AQSGTGKT. Ser65 is modified (phosphoserine). The short motif at 168 to 171 is the DEAD box element; the sequence is DEAD. In terms of domain architecture, Helicase C-terminal spans 231–392; that stretch reads GIKQFYVAVE…EMPMNIADLI (162 aa).

Belongs to the DEAD box helicase family. eIF4A subfamily. In terms of assembly, component of the eIF4F complex, which composition varies with external and internal environmental conditions. It is composed of at least eIF4A, eIF4E and eIF4G.

It localises to the cytoplasm. The catalysed reaction is ATP + H2O = ADP + phosphate + H(+). Functionally, ATP-dependent RNA helicase which is a subunit of the eIF4F complex involved in cap recognition and is required for mRNA binding to ribosome. In the current model of translation initiation, eIF4A unwinds RNA secondary structures in the 5'-UTR of mRNAs which is necessary to allow efficient binding of the small ribosomal subunit, and subsequent scanning for the initiator codon. The polypeptide is ATP-dependent RNA helicase eIF4A (tif1) (Schizosaccharomyces pombe (strain 972 / ATCC 24843) (Fission yeast)).